Here is a 469-residue protein sequence, read N- to C-terminus: 3-isopropylmalate dehydratase large subunit (469 aa).

Positions 347, 407, and 410 each coordinate [4Fe-4S] cluster.

This sequence belongs to the aconitase/IPM isomerase family. LeuC type 1 subfamily. As to quaternary structure, heterodimer of LeuC and LeuD. [4Fe-4S] cluster is required as a cofactor.

The enzyme catalyses (2R,3S)-3-isopropylmalate = (2S)-2-isopropylmalate. It participates in amino-acid biosynthesis; L-leucine biosynthesis; L-leucine from 3-methyl-2-oxobutanoate: step 2/4. In terms of biological role, catalyzes the isomerization between 2-isopropylmalate and 3-isopropylmalate, via the formation of 2-isopropylmaleate. This Synechococcus sp. (strain RCC307) protein is 3-isopropylmalate dehydratase large subunit.